We begin with the raw amino-acid sequence, 653 residues long: Laccase ustL (653 aa).

The first 20 residues, 1–20 (MTSLTGLALLLCVLASQSWA), serve as a signal peptide directing secretion. 2 consecutive Plastocyanin-like domains span residues 31 to 143 (WEKG…RPKR) and 173 to 362 (VLSD…ATQV). N-linked (GlcNAc...) asparagine glycosylation is found at asparagine 74, asparagine 220, asparagine 235, asparagine 255, asparagine 277, asparagine 405, asparagine 463, and asparagine 479. Residues 463 to 594 (NQTVGTEDEK…GGMSIALLDG (132 aa)) form the Plastocyanin-like 3 domain. Residues histidine 501, histidine 504, histidine 506, histidine 576, cysteine 577, histidine 578, and histidine 582 each coordinate Cu cation. Asparagine 623 carries N-linked (GlcNAc...) asparagine glycosylation.

The protein belongs to the multicopper oxidase family.

It carries out the reaction 4 norrubrofusarin + O2 = 2 ustilaginoidin A + 2 H2O. Its pathway is secondary metabolite biosynthesis. Laccase; part of the gene cluster that mediates the biosynthesis of ustilaginoidins, dimeric gamma-naphthopyrones isolated from different fungal species. The first step in the biosynthesis of ustilaginoidins is the production of gamma-naphthopyrone precursor YWA1 by the non-reducing polyketide synthase ustP, via condensation of one acetyl-CoA starter unit with 6 malonyl-CoA units. YWA1 is then probably substrate of the ustZ to yield norrubrofusarin via a dehydration reaction. A key enzyme in the biosynthetic pathway is the laccase ustL, which catalyzes the oxidative dimerization of norrubrofusarin to ustilaginoidin A. It can produce the M- and P-atropisomers in varying amounts, depending on the reaction conditions. For the biosynthesis of 3-methylustilaginoid in derivatives such as chaetochromin A, a methylated derivative of YWA1 is required. The C-methylation is considered to be catalyzed by ustM, the phosphopantetheine attachment site of which indicates that it acts on the growing polyketide chain before release of the product. For the biosynthesis of chaetochromin A, it is assumed that saturation of the D2 double bond takes place before dimerization, and is probably catalyzed by an external reductase because no candidate gene was identified within the cluster. This chain is Laccase ustL, found in Ustilaginoidea virens (Rice false smut fungus).